The chain runs to 242 residues: Probable septum site-determining protein MinC (242 aa).

This sequence belongs to the MinC family. Interacts with MinD and FtsZ.

Cell division inhibitor that blocks the formation of polar Z ring septums. Rapidly oscillates between the poles of the cell to destabilize FtsZ filaments that have formed before they mature into polar Z rings. Prevents FtsZ polymerization. This is Probable septum site-determining protein MinC from Thioalkalivibrio sulfidiphilus (strain HL-EbGR7).